We begin with the raw amino-acid sequence, 179 residues long: Probable DNA-directed RNA polymerase subunit delta (179 aa).

In terms of domain architecture, HTH HARE-type spans 14–81 (MSLVELAYEI…GDQRWGLRSW (68 aa)). Positions 108–179 (VVEEDFDEIE…DDLDDNEEEK (72 aa)) are disordered. The segment covering 109 to 179 (VEEDFDEIEE…DDLDDNEEEK (71 aa)) has biased composition (acidic residues).

It belongs to the RpoE family. In terms of assembly, RNAP is composed of a core of 2 alpha, a beta and a beta' subunits. The core is associated with a delta subunit and one of several sigma factors.

Participates in both the initiation and recycling phases of transcription. In the presence of the delta subunit, RNAP displays an increased specificity of transcription, a decreased affinity for nucleic acids, and an increased efficiency of RNA synthesis because of enhanced recycling. The protein is Probable DNA-directed RNA polymerase subunit delta of Bacillus pumilus (strain SAFR-032).